The following is a 389-amino-acid chain: viridiflorene synthase Agr2 (389 aa).

The signal sequence occupies residues 1-15 (MVWDFVLSLFHSLLA). Mg(2+) contacts are provided by Asp-128, Asn-263, Ser-267, and Glu-271. A DDXXD motif motif is present at residues 128 to 132 (DEVTD). 2 residues coordinate (2E,6E)-farnesyl diphosphate: Arg-360 and Tyr-361.

This sequence belongs to the terpene synthase family. Requires Mg(2+) as cofactor.

It catalyses the reaction (2E,6E)-farnesyl diphosphate = viridiflorene + diphosphate. Functionally, terpene cyclase that catalyzes the cyclization of farnesyl diphosphate (FPP) to viridiflorene. This chain is viridiflorene synthase Agr2, found in Cyclocybe aegerita (Black poplar mushroom).